The primary structure comprises 436 residues: Trigger factor (436 aa).

The region spanning 161–246 is the PPIase FKBP-type domain; it reads EDQLNIDFVG…VNTVSEPKLP (86 aa).

This sequence belongs to the FKBP-type PPIase family. Tig subfamily.

The protein resides in the cytoplasm. It carries out the reaction [protein]-peptidylproline (omega=180) = [protein]-peptidylproline (omega=0). Involved in protein export. Acts as a chaperone by maintaining the newly synthesized protein in an open conformation. Functions as a peptidyl-prolyl cis-trans isomerase. In Pseudomonas syringae pv. syringae (strain B728a), this protein is Trigger factor.